A 573-amino-acid polypeptide reads, in one-letter code: 3-(3-hydroxy-phenyl)propionate/3-hydroxycinnamic acid hydroxylase (573 aa).

Residues 18–47 (DVVI…IVEE) and 283–293 (FRKGRMFLAGD) each bind FAD.

It belongs to the PheA/TfdB FAD monooxygenase family. FAD serves as cofactor.

The catalysed reaction is 3-(3-hydroxyphenyl)propanoate + NADH + O2 + H(+) = 3-(2,3-dihydroxyphenyl)propanoate + NAD(+) + H2O. The enzyme catalyses (2E)-3-(3-hydroxyphenyl)prop-2-enoate + NADH + O2 + H(+) = (2E)-3-(2,3-dihydroxyphenyl)prop-2-enoate + NAD(+) + H2O. The protein operates within aromatic compound metabolism; 3-phenylpropanoate degradation. Catalyzes the insertion of one atom of molecular oxygen into position 2 of the phenyl ring of 3-(3-hydroxyphenyl)propionate (3-HPP) and hydroxycinnamic acid (3HCI). This is 3-(3-hydroxy-phenyl)propionate/3-hydroxycinnamic acid hydroxylase from Mycobacterium sp. (strain KMS).